Consider the following 196-residue polypeptide: MNEAVSPGALSTLFTDARTHNGWRETPVSDETLRELYALMKWGPTSANCSPARFVFIRTAEGKERLRPALSSGNLQKTLTAPVTAIVAWDSEFYERLPQLFPHGDARSWFTSSPQLAEETAFRNSSMQAAYLIVACRALGLDTGPMSGFDRQHVDDAFFAGSTLKSNLLINIGYGDSSKLYARLPRLSFEEACGLL.

This sequence belongs to the nitroreductase family. HadB/RutE subfamily. The cofactor is FMN.

It carries out the reaction 3-hydroxypropanoate + NADP(+) = 3-oxopropanoate + NADPH + H(+). In terms of biological role, may reduce toxic product malonic semialdehyde to 3-hydroxypropionic acid, which is excreted. This chain is Probable malonic semialdehyde reductase RutE, found in Escherichia coli (strain SMS-3-5 / SECEC).